The sequence spans 86 residues: Large ribosomal subunit protein bL27 (86 aa).

The segment at 1-21 (MAHHKGGGSSRNGKDSNPQYL) is disordered.

Belongs to the bacterial ribosomal protein bL27 family.

This is Large ribosomal subunit protein bL27 from Coprothermobacter proteolyticus (strain ATCC 35245 / DSM 5265 / OCM 4 / BT).